The sequence spans 323 residues: tRNA dimethylallyltransferase (323 aa).

ATP is bound at residue 12-19 (GPTAAGKT). 14–19 (TAAGKT) is a substrate binding site. Interaction with substrate tRNA regions lie at residues 37–40 (DSAL) and 161–165 (QRLMR).

Belongs to the IPP transferase family. As to quaternary structure, monomer. Requires Mg(2+) as cofactor.

The catalysed reaction is adenosine(37) in tRNA + dimethylallyl diphosphate = N(6)-dimethylallyladenosine(37) in tRNA + diphosphate. In terms of biological role, catalyzes the transfer of a dimethylallyl group onto the adenine at position 37 in tRNAs that read codons beginning with uridine, leading to the formation of N6-(dimethylallyl)adenosine (i(6)A). The polypeptide is tRNA dimethylallyltransferase (Pseudomonas aeruginosa (strain LESB58)).